Here is a 247-residue protein sequence, read N- to C-terminus: Ice-binding protein (247 aa).

An N-terminal signal peptide occupies residues Met-1–Ala-19. Asn-219 carries N-linked (GlcNAc...) asparagine glycosylation.

Belongs to the ice-binding protein family.

It localises to the secreted. In terms of biological role, binds ice crystals and most probably inhibits their growth in order to prevent cell damage from extracellular ice. In Flammulina populicola (Enokitake mushroom), this protein is Ice-binding protein.